The sequence spans 403 residues: Eukaryotic translation initiation factor 3 subunit H (403 aa).

Positions 57 to 206 (VRLDGLALTK…VKAYRLSPSF (150 aa)) constitute an MPN domain. The segment at 99-122 (ALPNPGRSNSERDEEEDRSSRNAT) is disordered.

This sequence belongs to the eIF-3 subunit H family. In terms of assembly, component of the eukaryotic translation initiation factor 3 (eIF-3) complex.

It is found in the cytoplasm. In terms of biological role, component of the eukaryotic translation initiation factor 3 (eIF-3) complex, which is involved in protein synthesis of a specialized repertoire of mRNAs and, together with other initiation factors, stimulates binding of mRNA and methionyl-tRNAi to the 40S ribosome. The eIF-3 complex specifically targets and initiates translation of a subset of mRNAs involved in cell proliferation. This is Eukaryotic translation initiation factor 3 subunit H from Mycosarcoma maydis (Corn smut fungus).